The chain runs to 349 residues: Putative transport protein jhp_0514 (349 aa).

A run of 8 helical transmembrane segments spans residues 6 to 26 (FFWI…QDFL), 27 to 47 (MDAL…VFLN), 56 to 76 (SFLC…FIVY), 143 to 163 (LKLV…FYYG), 195 to 215 (VLLT…TMII), 224 to 244 (LGIL…LIWI), 258 to 278 (EAIF…DSVI), and 300 to 320 (ILIF…GIIV).

It belongs to the autoinducer-2 exporter (AI-2E) (TC 2.A.86) family.

The protein resides in the cell membrane. The protein is Putative transport protein jhp_0514 of Helicobacter pylori (strain J99 / ATCC 700824) (Campylobacter pylori J99).